Consider the following 152-residue polypeptide: MSVYQVITVPNDILRGKALPVKEINAGVLRVLDNMRDTMYAADGVGLAAPQIGIPKRMIVVDIGENLLELINPEILKQEGNQLGSEGCLSVPGIVGRVNRAKKVLVKGLDRNGQELNFAAVDLLAKVLQHEIDHLEGILFIDKAIETRIEKL.

Fe cation contacts are provided by Cys-88 and His-130. Glu-131 is a catalytic residue. His-134 lines the Fe cation pocket.

It belongs to the polypeptide deformylase family. Requires Fe(2+) as cofactor.

It carries out the reaction N-terminal N-formyl-L-methionyl-[peptide] + H2O = N-terminal L-methionyl-[peptide] + formate. Its function is as follows. Removes the formyl group from the N-terminal Met of newly synthesized proteins. Requires at least a dipeptide for an efficient rate of reaction. N-terminal L-methionine is a prerequisite for activity but the enzyme has broad specificity at other positions. This Syntrophomonas wolfei subsp. wolfei (strain DSM 2245B / Goettingen) protein is Peptide deformylase.